We begin with the raw amino-acid sequence, 35 residues long: MDAFAYTLLMTLVVATLFFAVAFRDPPKIGKDSGK.

The helical transmembrane segment at Ala-3 to Phe-23 threads the bilayer.

It belongs to the PsbT family. As to quaternary structure, PSII is composed of 1 copy each of membrane proteins PsbA, PsbB, PsbC, PsbD, PsbE, PsbF, PsbH, PsbI, PsbJ, PsbK, PsbL, PsbM, PsbT, PsbX, PsbY, Psb30/Ycf12, peripheral proteins PsbO, CyanoQ (PsbQ), PsbU, PsbV and a large number of cofactors. It forms dimeric complexes.

Its subcellular location is the cellular thylakoid membrane. Found at the monomer-monomer interface of the photosystem II (PS II) dimer, plays a role in assembly and dimerization of PSII. PSII is a light-driven water plastoquinone oxidoreductase, using light energy to abstract electrons from H(2)O, generating a proton gradient subsequently used for ATP formation. The protein is Photosystem II reaction center protein T of Prochlorococcus marinus (strain MIT 9303).